We begin with the raw amino-acid sequence, 469 residues long: MFQNADEVQKYVADNDVKFIDVRFCDLPGVMQHFTIPAATFDPAEELAFDGSSIRGFQAIHESDMALRADLSTARVDPFRRDKTININFFIHDPITGEQYSRDPRNIAKKAEAYLASTGIADTAYFGPEAEFYVFDNVRFQTSANESFYHIDSEAGAWNTGAVENNRGYKVRYKGGYFPAPPVDHFADLRAEISLELDKNGLQVERQHHEVGTAGQAEINYKFNTLLAAADDLMLFKYIVKNVAWRNGKTATFMPKPIFGDNGSGMHVHQSLWQGGSPLFYDEQGYAGLSDTARYYIGGILKHAPSLLAFTNPTVNSYHRLVPGFEAPVNMVYSQRNRSAAMRIPITGSNPKAKRVEFRAPDPSSNPYLAFSALLMAGLDGVKNKIEPAEPIDKDLYELAPEEHANVQQVPTSLPAVLDALEADNEYLQAGGVFTSDLIETWIDYKRTNEIAPIQLRPHPHEFELYFDI.

The 82-residue stretch at 15–96 (NDVKFIDVRF…INFFIHDPIT (82 aa)) folds into the GS beta-grasp domain. Positions 104–469 (PRNIAKKAEA…PHEFELYFDI (366 aa)) constitute a GS catalytic domain. E129 and E131 together coordinate Mg(2+). Residue E205 participates in ATP binding. E210 and E218 together coordinate Mg(2+). 221 to 223 (YKF) contacts ATP. Residues 262–263 (NG) and G263 each bind L-glutamate. H267 provides a ligand contact to Mg(2+). ATP-binding positions include 269–271 (HQS) and S271. L-glutamate-binding residues include R320, E326, and R338. The ATP site is built by R338, R343, and K352. E357 provides a ligand contact to Mg(2+). R359 contacts L-glutamate. Y397 is subject to O-AMP-tyrosine.

It belongs to the glutamine synthetase family. In terms of assembly, oligomer of 12 subunits arranged in the form of two hexagons. Requires Mg(2+) as cofactor.

The protein resides in the cytoplasm. The enzyme catalyses L-glutamate + NH4(+) + ATP = L-glutamine + ADP + phosphate + H(+). Its activity is regulated as follows. The activity of this enzyme could be controlled by adenylation under conditions of abundant glutamine. Its function is as follows. Catalyzes the ATP-dependent biosynthesis of glutamine from glutamate and ammonia. This is Glutamine synthetase from Streptomyces filamentosus (Streptomyces roseosporus).